The primary structure comprises 207 residues: C-type lectin domain family 2 member D (207 aa).

At 1 to 41 (MCVTKASLPMLSPTGSPQEVEVGKILQGKRHGTISPESCAK) the chain is on the cytoplasmic side. Phosphoserine is present on residues S7 and S12. A helical; Signal-anchor for type II membrane protein transmembrane segment spans residues 42-62 (LYCYYGVIMVLTVAVIALSVA). Over 63 to 207 (LSATKTEQIP…LHCQTPFFPS (145 aa)) the chain is Extracellular. A disulfide bond links C80 and C91. The C-type lectin domain maps to 87 to 202 (VENKCFYFSE…LNSYSLHCQT (116 aa)). Residue N100 is glycosylated (N-linked (GlcNAc...) asparagine).

Homodimer; disulfide-linked. N-glycosylated. In terms of tissue distribution, detected in fetal heart, brain, lung, chondrocytes, perichondrium and osteoblasts, and in adult splenocytes, thymocytes, lymph-node cells, osteoblasts, growth plate chondrocytes and skeletal muscle overlying the bone (at protein level). Ubiquitous. Detected in thymus, bone marrow, lung, gut, heart, skeletal muscle, ovary, spleen, ileum, liver and kidney.

The protein localises to the cell membrane. Its function is as follows. Receptor for KLRB1B that protects target cells against natural killer cell-mediated lysis. Inhibits osteoclast formation. Binds high molecular weight sulfated glycosaminoglycans. In Mus musculus (Mouse), this protein is C-type lectin domain family 2 member D (Clec2d).